The primary structure comprises 440 residues: Chitinase-like protein Idgf5 (440 aa).

A signal peptide spans 1-27 (MRNKMIYFNFHLFVIIFANLQIFQVQA). Residues 28-439 (ANIFCYYDTQ…KSIHNAFKKF (412 aa)) enclose the GH18 domain. A disulfide bond links C32 and C56. 3 N-linked (GlcNAc...) asparagine glycosylation sites follow: N126, N283, and N403. The cysteines at positions 340 and 421 are disulfide-linked.

The protein belongs to the glycosyl hydrolase 18 family. IDGF subfamily. In terms of processing, glycosylated.

The protein localises to the secreted. Functionally, cooperates with insulin-like peptides to stimulate the proliferation, polarization and motility of imaginal disk cells. May act by stabilizing the binding of insulin-like peptides to its receptor through a simultaneous interaction with both molecules to form a multiprotein signaling complex. In Glossina morsitans morsitans (Savannah tsetse fly), this protein is Chitinase-like protein Idgf5 (Idgf5).